The primary structure comprises 308 residues: Dihydroorotate dehydrogenase A (fumarate) (308 aa).

FMN-binding positions include Ser-24 and 48–49; that span reads KS. Residues Lys-48, 72–76, and Asn-132 each bind substrate; that span reads NANGL. FMN is bound at residue Asn-132. Cys-135 serves as the catalytic Nucleophile. FMN-binding residues include Lys-171 and Ile-197. 198-199 contacts substrate; sequence NT. FMN contacts are provided by residues Gly-223 and 249–250; that span reads GG.

Belongs to the dihydroorotate dehydrogenase family. Type 1 subfamily. As to quaternary structure, homodimer. FMN serves as cofactor.

Its subcellular location is the cytoplasm. It carries out the reaction (S)-dihydroorotate + fumarate = orotate + succinate. It participates in pyrimidine metabolism; UMP biosynthesis via de novo pathway. Its function is as follows. Catalyzes the conversion of dihydroorotate to orotate with fumarate as the electron acceptor. This Limosilactobacillus reuteri (strain DSM 20016) (Lactobacillus reuteri) protein is Dihydroorotate dehydrogenase A (fumarate) (pyrD).